The sequence spans 883 residues: Protein argonaute 16 (883 aa).

The PAZ domain maps to 254–366 (PVFDFLLTNQ…VPIELCHMVS (113 aa)). Residues 535-844 (FLLCVLPERK…AAAQMGQFMK (310 aa)) form the Piwi domain.

It belongs to the argonaute family. Ago subfamily.

Its function is as follows. Probably involved in the RNA silencing pathway. May bind to short RNAs such as microRNAs (miRNAs) or short interfering RNAs (siRNAs), and represses the translation of mRNAs which are complementary to them. In Oryza sativa subsp. japonica (Rice), this protein is Protein argonaute 16 (AGO16).